Reading from the N-terminus, the 150-residue chain is Viral late gene transcription factor 2 (150 aa).

This sequence belongs to the orthopoxvirus VLTF-2/OPG126 family. Interacts with itself. Interacts with the late transcription factors VLTF-1/OPG093.

Its function is as follows. Acts with RNA polymerase to initiate transcription from late gene promoters. In Vaccinia virus (strain Western Reserve) (VACV), this protein is Viral late gene transcription factor 2 (OPG126).